Here is a 216-residue protein sequence, read N- to C-terminus: Elongation factor 1-beta (216 aa).

Belongs to the EF-1-beta/EF-1-delta family. As to quaternary structure, EF-1 is composed of 4 subunits: alpha, beta, delta, and gamma. Interacts with actin.

The protein resides in the cytoplasm. Its function is as follows. EF-1-beta and EF-1-delta stimulate the exchange of GDP bound to EF-1-alpha to GTP. The polypeptide is Elongation factor 1-beta (efa1B) (Dictyostelium discoideum (Social amoeba)).